The chain runs to 407 residues: Magnesium-protoporphyrin IX monomethyl ester [oxidative] cyclase 1, chloroplastic (407 aa).

Over residues 1–10 the composition is skewed to polar residues; that stretch reads MQTTLKQQRA. Residues 1 to 28 are disordered; the sequence is MQTTLKQQRASGRVSARQPFRSAAVARP.

This sequence belongs to the AcsF family. The cofactor is Fe cation.

The protein resides in the plastid. It is found in the chloroplast thylakoid membrane. It catalyses the reaction Mg-protoporphyrin IX 13-monomethyl ester + 3 NADPH + 3 O2 + 2 H(+) = 3,8-divinyl protochlorophyllide a + 3 NADP(+) + 5 H2O. It participates in porphyrin-containing compound metabolism; chlorophyll biosynthesis. Its function is as follows. Catalyzes the formation of the isocyclic ring in chlorophyll biosynthesis under oxygen- and copper-deficient conditions. Mediates the cyclase reaction, which results in the formation of divinylprotochlorophyllide (Pchlide) characteristic of all chlorophylls from magnesium-protoporphyrin IX 13-monomethyl ester (MgPMME). This Chlamydomonas reinhardtii (Chlamydomonas smithii) protein is Magnesium-protoporphyrin IX monomethyl ester [oxidative] cyclase 1, chloroplastic (CRD1).